A 352-amino-acid chain; its full sequence is tRNA pseudouridine synthase D (352 aa).

The active-site Nucleophile is D81. The TRUD domain occupies 157 to 303 (GVPNYFGTQR…MDHERRILRL (147 aa)).

Belongs to the pseudouridine synthase TruD family.

It carries out the reaction uridine(13) in tRNA = pseudouridine(13) in tRNA. Responsible for synthesis of pseudouridine from uracil-13 in transfer RNAs. This Pseudomonas putida (strain ATCC 700007 / DSM 6899 / JCM 31910 / BCRC 17059 / LMG 24140 / F1) protein is tRNA pseudouridine synthase D.